Here is a 410-residue protein sequence, read N- to C-terminus: 3-phosphoshikimate 1-carboxyvinyltransferase (410 aa).

Positions 21, 22, and 26 each coordinate 3-phosphoshikimate. Lys21 contacts phosphoenolpyruvate. Gly69 and Arg97 together coordinate phosphoenolpyruvate. The 3-phosphoshikimate site is built by Ser143, Ser144, Gln145, Ser171, Asp288, and Lys315. Gln145 serves as a coordination point for phosphoenolpyruvate. Asp288 acts as the Proton acceptor in catalysis. 3 residues coordinate phosphoenolpyruvate: Arg319, Arg364, and Lys389.

The protein belongs to the EPSP synthase family. In terms of assembly, monomer.

It is found in the cytoplasm. The enzyme catalyses 3-phosphoshikimate + phosphoenolpyruvate = 5-O-(1-carboxyvinyl)-3-phosphoshikimate + phosphate. It participates in metabolic intermediate biosynthesis; chorismate biosynthesis; chorismate from D-erythrose 4-phosphate and phosphoenolpyruvate: step 6/7. In terms of biological role, catalyzes the transfer of the enolpyruvyl moiety of phosphoenolpyruvate (PEP) to the 5-hydroxyl of shikimate-3-phosphate (S3P) to produce enolpyruvyl shikimate-3-phosphate and inorganic phosphate. The chain is 3-phosphoshikimate 1-carboxyvinyltransferase from Bacteroides fragilis (strain ATCC 25285 / DSM 2151 / CCUG 4856 / JCM 11019 / LMG 10263 / NCTC 9343 / Onslow / VPI 2553 / EN-2).